The sequence spans 571 residues: Proline--tRNA ligase (571 aa).

Belongs to the class-II aminoacyl-tRNA synthetase family. ProS type 1 subfamily. In terms of assembly, homodimer.

It is found in the cytoplasm. The enzyme catalyses tRNA(Pro) + L-proline + ATP = L-prolyl-tRNA(Pro) + AMP + diphosphate. In terms of biological role, catalyzes the attachment of proline to tRNA(Pro) in a two-step reaction: proline is first activated by ATP to form Pro-AMP and then transferred to the acceptor end of tRNA(Pro). As ProRS can inadvertently accommodate and process non-cognate amino acids such as alanine and cysteine, to avoid such errors it has two additional distinct editing activities against alanine. One activity is designated as 'pretransfer' editing and involves the tRNA(Pro)-independent hydrolysis of activated Ala-AMP. The other activity is designated 'posttransfer' editing and involves deacylation of mischarged Ala-tRNA(Pro). The misacylated Cys-tRNA(Pro) is not edited by ProRS. The polypeptide is Proline--tRNA ligase (Histophilus somni (strain 129Pt) (Haemophilus somnus)).